The sequence spans 211 residues: Abscisic acid receptor PYL7 (211 aa).

Residues His-29 to Glu-180 are START-like. 2 disulfide bridges follow: Cys-31-Cys-161 and Cys-36-Cys-161. Residues Lys-65, Ala-93 to Glu-98, Arg-120 to Ser-126, and Glu-145 each bind abscisate. The Gate loop signature appears at Ser-89–Ala-93. A Latch loop motif is present at residues His-119–Leu-121.

It belongs to the PYR/PYL/RCAR abscisic acid intracellular receptor family. Homodimer. Binds ABA on one subunit only. Binds to CARs protein in an ABA-independent manner, both at the plasma membrane and in the nucleus. Interacts with ABI1, and possibly with other PP2Cs.

Its subcellular location is the cytoplasm. It is found in the nucleus. The protein resides in the cell membrane. Functionally, receptor for abscisic acid (ABA) required for ABA-mediated responses such as stomatal closure and germination inhibition. Inhibits the activity of group-A protein phosphatases type 2C (PP2Cs) when activated by ABA. The sequence is that of Abscisic acid receptor PYL7 (PYL7) from Arabidopsis thaliana (Mouse-ear cress).